We begin with the raw amino-acid sequence, 426 residues long: 5-aminovalerate aminotransferase DavT (426 aa).

Pyridoxal 5'-phosphate is bound by residues glycine 112–serine 113, tyrosine 139, and aspartate 240–glutamine 243. Lysine 269 carries the N6-(pyridoxal phosphate)lysine modification. Residue threonine 298 participates in pyridoxal 5'-phosphate binding.

This sequence belongs to the class-III pyridoxal-phosphate-dependent aminotransferase family. It depends on pyridoxal 5'-phosphate as a cofactor.

The enzyme catalyses 5-aminopentanoate + 2-oxoglutarate = 5-oxopentanoate + L-glutamate. Its function is as follows. Catalyzes the conversion of 5-aminovalerate to 5-oxopentanoate. The polypeptide is 5-aminovalerate aminotransferase DavT (davT) (Pseudomonas aeruginosa (strain ATCC 15692 / DSM 22644 / CIP 104116 / JCM 14847 / LMG 12228 / 1C / PRS 101 / PAO1)).